The following is a 730-amino-acid chain: UvrABC system protein C (730 aa).

The GIY-YIG domain occupies 16–95; the sequence is AAPGVYKFRD…IKEFDPRFNV (80 aa). The region spanning 208–243 is the UVR domain; the sequence is DKLVKDLEKRMQQASEDLDFETAARLRDDIGALRKA. The interval 678 to 730 is disordered; that stretch reads ARALPAAVGDDELDKESESSVTSADAPSAESGSGDEGSESRELSMPTTGPSAQ.

It belongs to the UvrC family. In terms of assembly, interacts with UvrB in an incision complex.

Its subcellular location is the cytoplasm. In terms of biological role, the UvrABC repair system catalyzes the recognition and processing of DNA lesions. UvrC both incises the 5' and 3' sides of the lesion. The N-terminal half is responsible for the 3' incision and the C-terminal half is responsible for the 5' incision. This Rhodococcus erythropolis (strain PR4 / NBRC 100887) protein is UvrABC system protein C.